The chain runs to 481 residues: Protein NRT1/ PTR FAMILY 1.3 (481 aa).

Transmembrane regions (helical) follow at residues 32–52 (LAYF…YGMG), 57–77 (ANIL…GAFI), 88–108 (IGFG…TTII), 124–144 (LLKS…AGGV), 173–193 (FNWY…LLVF), 202–222 (IGFG…FAAS), 259–279 (IWST…FIVL), 302–322 (IFLV…IVPL), 333–353 (LGVM…ISAL), 374–394 (AMWL…NTIA), 422–442 (ASLI…GSWI), and 451–471 (LDYY…YFVW).

It belongs to the major facilitator superfamily. Proton-dependent oligopeptide transporter (POT/PTR) (TC 2.A.17) family. Expressed in roots.

The protein localises to the membrane. The chain is Protein NRT1/ PTR FAMILY 1.3 (NPF1.3) from Arabidopsis thaliana (Mouse-ear cress).